We begin with the raw amino-acid sequence, 150 residues long: Galectin-2 (150 aa).

The region spanning 9-141 (NQVKLQNDFK…FSSPVTVDVH (133 aa)) is the Galectin domain. 5 residues coordinate a carbohydrate: histidine 51, arginine 55, asparagine 64, glutamate 75, and arginine 77.

Homotetramer. Oligomerization is required for carbohydrate binding.

It is found in the secreted. It localises to the extracellular space. Its subcellular location is the extracellular matrix. The protein resides in the cell wall. The protein localises to the endomembrane system. Binds lactose. May play a role in fruiting body formation. Displays toxicity towards the nematode C.elegans by binding to a specific Gal-beta-1,4-Fuc-alpha-1,6 modification of N-glycan cores on C.elegans intestinal cells. In Coprinopsis cinerea (Inky cap fungus), this protein is Galectin-2 (Cgl2).